Here is a 194-residue protein sequence, read N- to C-terminus: Peptidyl-tRNA hydrolase (194 aa).

Tyr17 provides a ligand contact to tRNA. Residue His22 is the Proton acceptor of the active site. Residues Tyr68, Asn70, and Asn116 each coordinate tRNA.

Belongs to the PTH family. In terms of assembly, monomer.

The protein localises to the cytoplasm. It carries out the reaction an N-acyl-L-alpha-aminoacyl-tRNA + H2O = an N-acyl-L-amino acid + a tRNA + H(+). Functionally, hydrolyzes ribosome-free peptidyl-tRNAs (with 1 or more amino acids incorporated), which drop off the ribosome during protein synthesis, or as a result of ribosome stalling. In terms of biological role, catalyzes the release of premature peptidyl moieties from peptidyl-tRNA molecules trapped in stalled 50S ribosomal subunits, and thus maintains levels of free tRNAs and 50S ribosomes. This is Peptidyl-tRNA hydrolase from Chromohalobacter salexigens (strain ATCC BAA-138 / DSM 3043 / CIP 106854 / NCIMB 13768 / 1H11).